Here is a 130-residue protein sequence, read N- to C-terminus: Modulator protein MzrA (130 aa).

Over 1–15 (MIAAFIKRHAPQRRL) the chain is Cytoplasmic. The chain crosses the membrane as a helical span at residues 16-36 (SLWLALPVVALLALVMMPALF). The Periplasmic portion of the chain corresponds to 37–130 (RHDSALQIRA…RISFKPQSIG (94 aa)).

It belongs to the MzrA family. Interacts with EnvZ.

Its subcellular location is the cell inner membrane. Its function is as follows. Modulates the activity of the EnvZ/OmpR two-component regulatory system, probably by directly modulating EnvZ enzymatic activity and increasing stability of phosphorylated OmpR. The polypeptide is Modulator protein MzrA (Erwinia tasmaniensis (strain DSM 17950 / CFBP 7177 / CIP 109463 / NCPPB 4357 / Et1/99)).